Reading from the N-terminus, the 67-residue chain is Large ribosomal subunit protein bL32 (67 aa).

The span at 1-19 (MAVPKRKMSRANTRARRSQ) shows a compositional bias: basic residues. Residues 1–21 (MAVPKRKMSRANTRARRSQWK) form a disordered region.

It belongs to the bacterial ribosomal protein bL32 family.

This is Large ribosomal subunit protein bL32 from Micrococcus luteus (strain ATCC 4698 / DSM 20030 / JCM 1464 / CCM 169 / CCUG 5858 / IAM 1056 / NBRC 3333 / NCIMB 9278 / NCTC 2665 / VKM Ac-2230) (Micrococcus lysodeikticus).